A 313-amino-acid polypeptide reads, in one-letter code: Protein FixB (313 aa).

Leucine 255 to aspartate 283 is an FAD binding site.

The protein belongs to the ETF alpha-subunit/FixB family. In terms of assembly, heterodimer of FixA and FixB.

The protein operates within amine and polyamine metabolism; carnitine metabolism. In terms of biological role, required for anaerobic carnitine reduction. May bring reductant to CaiA. In Salmonella agona (strain SL483), this protein is Protein FixB.